The sequence spans 360 residues: D-alanine--D-alanine ligase (360 aa).

The 205-residue stretch at 149 to 353 folds into the ATP-grasp domain; the sequence is KKLMAAEGLP…YEELLDVLVQ (205 aa). An ATP-binding site is contributed by 176-231; sequence KNLLGLPVFVKPARGGSSIGISRVTAWEDFNKAVGLARAHDEKVIVESEIVGSEVE. The Mg(2+) site is built by Asp-308, Glu-320, and Asn-322.

The protein belongs to the D-alanine--D-alanine ligase family. Mg(2+) is required as a cofactor. Requires Mn(2+) as cofactor.

The protein localises to the cytoplasm. It carries out the reaction 2 D-alanine + ATP = D-alanyl-D-alanine + ADP + phosphate + H(+). Its pathway is cell wall biogenesis; peptidoglycan biosynthesis. In terms of biological role, cell wall formation. The sequence is that of D-alanine--D-alanine ligase from Corynebacterium glutamicum (strain R).